We begin with the raw amino-acid sequence, 303 residues long: Zinc import ATP-binding protein ZnuC (303 aa).

In terms of domain architecture, ABC transporter spans 17-232 (VSLENVGVLR…PEYVRLFGSR (216 aa)). 49–56 (GPNGSGKS) is an ATP binding site. The segment at 263 to 303 (DHCHPDDGHHAHEHGHAGHEHDHDHPDHAHPHAHEAGERHA) is disordered.

Belongs to the ABC transporter superfamily. Zinc importer (TC 3.A.1.15.5) family. In terms of assembly, the complex is composed of two ATP-binding proteins (ZnuC), two transmembrane proteins (ZnuB) and a solute-binding protein (ZnuA).

The protein resides in the cell inner membrane. The catalysed reaction is Zn(2+)(out) + ATP(in) + H2O(in) = Zn(2+)(in) + ADP(in) + phosphate(in) + H(+)(in). Part of the ABC transporter complex ZnuABC involved in zinc import. Responsible for energy coupling to the transport system. This chain is Zinc import ATP-binding protein ZnuC, found in Rhizobium johnstonii (strain DSM 114642 / LMG 32736 / 3841) (Rhizobium leguminosarum bv. viciae).